The following is a 321-amino-acid chain: Malate dehydrogenase (321 aa).

Residues 11–16 and Asp-35 contribute to the NAD(+) site; that span reads GSGNIG. Residues Arg-84 and Arg-90 each contribute to the substrate site. Residues Asn-97 and 120 to 122 each bind NAD(+); that span reads ITN. Positions 122 and 153 each coordinate substrate. The active-site Proton acceptor is the His-177.

This sequence belongs to the LDH/MDH superfamily. MDH type 3 family.

It carries out the reaction (S)-malate + NAD(+) = oxaloacetate + NADH + H(+). Functionally, catalyzes the reversible oxidation of malate to oxaloacetate. The sequence is that of Malate dehydrogenase from Rickettsia peacockii (strain Rustic).